Here is an 852-residue protein sequence, read N- to C-terminus: DNA mismatch repair protein MutS (852 aa).

602-609 (GPNMSGKS) serves as a coordination point for ATP.

Belongs to the DNA mismatch repair MutS family.

This protein is involved in the repair of mismatches in DNA. It is possible that it carries out the mismatch recognition step. This protein has a weak ATPase activity. The chain is DNA mismatch repair protein MutS from Streptococcus thermophilus (strain ATCC BAA-491 / LMD-9).